The sequence spans 738 residues: Melanotransferrin (738 aa).

The N-terminal stretch at 1-19 (MRLLSVTFWLLLSLRTVVC) is a signal peptide. Transferrin-like domains are found at residues 23-357 (VQWC…GLLC) and 366-706 (LRWC…GMLS). Disulfide bonds link Cys26–Cys63 and Cys36–Cys54. Fe(3+) contacts are provided by Asp78 and Tyr107. N-linked (GlcNAc...) asparagine glycosylation is present at Asn118. Cystine bridges form between Cys130/Cys216, Cys172/Cys189, Cys186/Cys199, and Cys257/Cys271. Thr132 lines the hydrogencarbonate pocket. Residue Asn135 is glycosylated (N-linked (GlcNAc...) asparagine). Hydrogencarbonate is bound by residues Arg136, Val138, and Gly139. Tyr210 is a binding site for Fe(3+). Fe(3+) is bound by residues His279 and Tyr451. A Phosphoserine modification is found at Ser462. Residue Asn515 is glycosylated (N-linked (GlcNAc...) asparagine). Positions 556 and 625 each coordinate Fe(3+). The GPI-anchor amidated cysteine moiety is linked to residue Cys709. A propeptide spans 710-738 (SGAGAAVQRVPLLALLLLTLAAGLLPRVL) (removed in mature form).

It belongs to the transferrin family.

It localises to the cell membrane. Functionally, involved in iron cellular uptake. Seems to be internalized and then recycled back to the cell membrane. Binds a single atom of iron per subunit. Could also bind zinc. The polypeptide is Melanotransferrin (Meltf) (Mus musculus (Mouse)).